Consider the following 405-residue polypeptide: Formate-dependent phosphoribosylglycinamide formyltransferase (405 aa).

N(1)-(5-phospho-beta-D-ribosyl)glycinamide-binding positions include 22-23 and Glu-82; that span reads EL. Residues Arg-115, Lys-162, 167–172, 202–205, and Glu-210 each bind ATP; these read SSGKGQ and EGFI. Residues 120 to 320 enclose the ATP-grasp domain; sequence RLAAETLGLA…EFELHARAIL (201 aa). Residues Glu-279 and Glu-291 each coordinate Mg(2+). Residues Asp-298, Lys-367, and 374-375 each bind N(1)-(5-phospho-beta-D-ribosyl)glycinamide; that span reads RR.

It belongs to the PurK/PurT family. As to quaternary structure, homodimer.

The catalysed reaction is N(1)-(5-phospho-beta-D-ribosyl)glycinamide + formate + ATP = N(2)-formyl-N(1)-(5-phospho-beta-D-ribosyl)glycinamide + ADP + phosphate + H(+). It participates in purine metabolism; IMP biosynthesis via de novo pathway; N(2)-formyl-N(1)-(5-phospho-D-ribosyl)glycinamide from N(1)-(5-phospho-D-ribosyl)glycinamide (formate route): step 1/1. Its function is as follows. Involved in the de novo purine biosynthesis. Catalyzes the transfer of formate to 5-phospho-ribosyl-glycinamide (GAR), producing 5-phospho-ribosyl-N-formylglycinamide (FGAR). Formate is provided by PurU via hydrolysis of 10-formyl-tetrahydrofolate. This is Formate-dependent phosphoribosylglycinamide formyltransferase from Delftia acidovorans (strain DSM 14801 / SPH-1).